Here is a 338-residue protein sequence, read N- to C-terminus: MVQITKGKFDGLQRLSNDKGVIAALAIDQRGSLKKMIQQAKGTENKKDVEDFKQLVSEELTPYASAILLDLEYGTPAIKARHEGSGLLTSYEKTGYDATTPGKLPDLIEDLSALRIKENGGDAVKILVYYDPDEPAEINEIKYAFLERIGAECRAVDIPFFLEPITYDATVTDSGSLEYAKLKPAKVKASIKEFSKPRYGVDVLKLEVPVNFKYVEGFAEGEVAYTQDEAARHFEECSDLSPLPFIYLSAGVTSEMFHKTIQFANQHNVQYSGVLCGRATWADGIEVYGKQGDDALREWLRTQGKENITSLDKLLDEGAVPWWTKYGSFEDVHVVEKQ.

It belongs to the aldolase LacD family.

It catalyses the reaction D-tagatofuranose 1,6-bisphosphate = D-glyceraldehyde 3-phosphate + dihydroxyacetone phosphate. The protein operates within carbohydrate metabolism; D-tagatose 6-phosphate degradation; D-glyceraldehyde 3-phosphate and glycerone phosphate from D-tagatose 6-phosphate: step 2/2. The sequence is that of Tagatose 1,6-diphosphate aldolase from Listeria monocytogenes serovar 1/2a (strain ATCC BAA-679 / EGD-e).